Consider the following 365-residue polypeptide: Mitogen-activated protein kinase HOG1A (365 aa).

One can recognise a Protein kinase domain in the interval 24-303; that stretch reads YTDLQPVGMG…AADALAHPYL (280 aa). Residues 30-38 and K53 each bind ATP; that span reads VGMGAFGLL. The Proton acceptor role is filled by D145. A Phosphothreonine modification is found at T175. Residues 175 to 177 carry the TXY motif; sequence TGY. Y177 carries the phosphotyrosine modification.

It belongs to the protein kinase superfamily. Ser/Thr protein kinase family. MAP kinase subfamily. HOG1 sub-subfamily. The cofactor is Mg(2+). In terms of processing, phosphorylated. Dually phosphorylated on Thr-175 and Tyr-177, which activates the enzyme. Rapidly dephosphorylated upon either hypo- or hyperosmotic shock.

Its subcellular location is the cytoplasm. The protein localises to the nucleus. It catalyses the reaction L-seryl-[protein] + ATP = O-phospho-L-seryl-[protein] + ADP + H(+). The catalysed reaction is L-threonyl-[protein] + ATP = O-phospho-L-threonyl-[protein] + ADP + H(+). With respect to regulation, activated by tyrosine and threonine phosphorylation. Functionally, proline-directed serine/threonine-protein kinase involved in a signal transduction pathway that is activated by changes in the osmolarity of the extracellular environment. Controls osmotic regulation of transcription of target genes. This chain is Mitogen-activated protein kinase HOG1A (HOG1A), found in Wallemia ichthyophaga (strain EXF-994 / CBS 113033).